The sequence spans 338 residues: Large ribosomal subunit protein uL10 (338 aa).

Low complexity predominate over residues 298–308; sequence AAQQTQTQQST. The interval 298–338 is disordered; sequence AAQQTQTQQSTAEEKKEEKKEEEKKGPSEEEIGSGLASLFG. The span at 309–325 shows a compositional bias: basic and acidic residues; that stretch reads AEEKKEEKKEEEKKGPS.

Belongs to the universal ribosomal protein uL10 family. As to quaternary structure, part of the 50S ribosomal subunit. Forms part of the ribosomal stalk which helps the ribosome interact with GTP-bound translation factors. Forms a heptameric L10(L12)2(L12)2(L12)2 complex, where L10 forms an elongated spine to which the L12 dimers bind in a sequential fashion.

In terms of biological role, forms part of the ribosomal stalk, playing a central role in the interaction of the ribosome with GTP-bound translation factors. This is Large ribosomal subunit protein uL10 from Saccharolobus islandicus (strain M.16.27) (Sulfolobus islandicus).